The primary structure comprises 132 residues: Small ribosomal subunit protein uS8 (132 aa).

The protein belongs to the universal ribosomal protein uS8 family. As to quaternary structure, part of the 30S ribosomal subunit. Contacts proteins S5 and S12.

Its function is as follows. One of the primary rRNA binding proteins, it binds directly to 16S rRNA central domain where it helps coordinate assembly of the platform of the 30S subunit. This chain is Small ribosomal subunit protein uS8, found in Granulibacter bethesdensis (strain ATCC BAA-1260 / CGDNIH1).